Here is a 141-residue protein sequence, read N- to C-terminus: Large ribosomal subunit protein uL11 (141 aa).

It belongs to the universal ribosomal protein uL11 family. Part of the ribosomal stalk of the 50S ribosomal subunit. Interacts with L10 and the large rRNA to form the base of the stalk. L10 forms an elongated spine to which L12 dimers bind in a sequential fashion forming a multimeric L10(L12)X complex. One or more lysine residues are methylated.

In terms of biological role, forms part of the ribosomal stalk which helps the ribosome interact with GTP-bound translation factors. This is Large ribosomal subunit protein uL11 from Lactobacillus johnsonii (strain CNCM I-12250 / La1 / NCC 533).